A 101-amino-acid chain; its full sequence is MNSHFASAHTPFYINTKEGRYLVLKAVKVCDVRTVEFEGSKASCVLKVDKPSSPASERRPSSPSRCERMNNPGKQVPFMRTDMLQNMFAANRDNVASRLLS.

The disordered stretch occupies residues 48 to 76 (VDKPSSPASERRPSSPSRCERMNNPGKQV). S53 and S62 each carry phosphoserine. Positions 56 to 68 (SERRPSSPSRCER) are enriched in basic and acidic residues.

It belongs to the orthopoxvirus OPG062 family. Self-associates to form high molecular-weight forms. Interacts with protein OPG157. Interacts with host RICTOR and RPTOR; these interactions disrupt the mTORC1 and mTORC2 crosstalk. Phosphorylated on two serines. While these phosphorylations do not play a role in virion assembly; they are essential for the interaction with host RICTOR and RPTOR.

Its subcellular location is the virion. Plays an essential role in virion assembly and morphogenesis. Also plays a role in the inhibition of host immune response by dysregulating mTOR. Sequesters host RICTOR and RPTOR, thereby disrupting mTORC1 and mTORC2 crosstalk. In turn, blocks the host antiviral response in part through mTOR-dependent degradation of cGAS, the primary poxvirus sensor. In Variola virus (isolate Human/India/Ind3/1967) (VARV), this protein is Phosphoprotein OPG062 (OPG062).